The chain runs to 172 residues: RNA pyrophosphohydrolase (172 aa).

Positions 6–149 (GYRLNVGIVI…KRDVYRRAMK (144 aa)) constitute a Nudix hydrolase domain. Residues 38–59 (GGIDDGESPEQAMFRELYEEVG) carry the Nudix box motif.

This sequence belongs to the Nudix hydrolase family. RppH subfamily. A divalent metal cation serves as cofactor.

Accelerates the degradation of transcripts by removing pyrophosphate from the 5'-end of triphosphorylated RNA, leading to a more labile monophosphorylated state that can stimulate subsequent ribonuclease cleavage. This chain is RNA pyrophosphohydrolase, found in Vibrio cholerae serotype O1 (strain ATCC 39315 / El Tor Inaba N16961).